The chain runs to 78 residues: Large ribosomal subunit protein bL28 (78 aa).

It belongs to the bacterial ribosomal protein bL28 family.

This chain is Large ribosomal subunit protein bL28, found in Pectobacterium carotovorum subsp. carotovorum (strain PC1).